A 942-amino-acid chain; its full sequence is MSDYKHTLNLPETPFPMRGNLAQREPKMLKAWYEDDLYGQIRSAKKGKKTFILHDGPPYANGDIHLGHSVNKILKDIIVKSKTLSDFDSPLVPGWDCHGLPIELMVEKKVGKPGVKVTASEFREKCRAYAKKQVEGQKVDFKRLGVFADWDKPYLTMNFDFEANAIRVLGRIIEKGHLHKGAKPVHWCTDCGSALAEAEVEYQDKQSPAIDVRFIFNDQDAVVSAFDLADGHKGTGKVGTVIWTTTPWTLPANRAVAVHAELEYALVQVEDEGKQQRLILGSELVKDAMDRFGFNQFHVLGYVKGAALENLQVAHPFYDFSVPVIVAEHVTTDSGTGVVHTAPGHGQEDFVAGLEYKLEVANPVGANGVYLPDTELFAGQHVFKANASIVEVLKEHGALMHHHAITHSYPHCWRHKTPIIFRATPQWFISMDQANLRQDSLNEIKNTQWLPEWGESRIANMVEGRPDWCISRQRTWGVPIALFADKDTGAIHPNTQELIEQAAQLVEKSGIQAWYDLDPATLLGEEDAKQYMKVQDTLDVWFDSGVSHACVVDAREDLTGPADLYLEGSDQHRGWFMSSMMTSVAINGHAPYRQVLTHGFTVDENGRKMSKSLGNVISPQNVMNKLGADILRLWVASTDYTAEMTVSDEIFNRSADRYRRIRNTSRYLLANLNGFDPKTDQVAVNDMVELDKWIVGRAAQLQTEILAAYDSYQMLLVTQKLMNFCTGELGSFYLDVIKDRQYTAKSDSHARRSCQTALYHIAEAMTRWMAPIMSFTAQEIWEALPGERSDYVFTSTWYEGLQAPTNSQFSNDDWLEILTVRDEVNRLLEAARKEEVIGATLQATVNLYTGKALAAKLLALGDELRFVFLTSAVNVTEVDSQPADTQTTEIDGLYISVAATDAQKCERCWHYSADVGVEPAHPEICGRCVSNVDGEGEQRQFA.

Residues 58–68 carry the 'HIGH' region motif; it reads PYANGDIHLGH. An L-isoleucyl-5'-AMP-binding site is contributed by Glu-567. A 'KMSKS' region motif is present at residues 608–612; sequence KMSKS. Lys-611 provides a ligand contact to ATP. Residues Cys-905, Cys-908, Cys-925, and Cys-928 each contribute to the Zn(2+) site.

Belongs to the class-I aminoacyl-tRNA synthetase family. IleS type 1 subfamily. As to quaternary structure, monomer. Requires Zn(2+) as cofactor.

The protein resides in the cytoplasm. The enzyme catalyses tRNA(Ile) + L-isoleucine + ATP = L-isoleucyl-tRNA(Ile) + AMP + diphosphate. Its function is as follows. Catalyzes the attachment of isoleucine to tRNA(Ile). As IleRS can inadvertently accommodate and process structurally similar amino acids such as valine, to avoid such errors it has two additional distinct tRNA(Ile)-dependent editing activities. One activity is designated as 'pretransfer' editing and involves the hydrolysis of activated Val-AMP. The other activity is designated 'posttransfer' editing and involves deacylation of mischarged Val-tRNA(Ile). The sequence is that of Isoleucine--tRNA ligase from Pseudoalteromonas translucida (strain TAC 125).